The chain runs to 402 residues: Protein FAM53A (402 aa).

Serine 119 carries the phosphoserine modification. A disordered region spans residues 170 to 215 (LVPGLPRRPVSPAGPTSPLTPRPASASSGFVDGSEGSTSSGPPWLS). The short motif at 273–281 (RRVRRKRRR) is the Nuclear localization signal element. Serine 306 and serine 309 each carry phosphoserine. Polar residues predominate over residues 323–333 (TLVSSPCNSQG). The segment at 323–402 (TLVSSPCNSQ…DLDLEQIENN (80 aa)) is disordered. Over residues 336–345 (GIITPSSSPR) the composition is skewed to low complexity.

It belongs to the FAM53 family.

The protein resides in the nucleus. May play an important role in neural development; the dorsomedial roof of the third ventricle. The protein is Protein FAM53A of Mus musculus (Mouse).